The following is a 428-amino-acid chain: UPF0761 membrane protein Ppha_1623 (428 aa).

6 helical membrane-spanning segments follow: residues L52–F72, S108–V128, F148–A168, L189–V209, F216–S233, and G252–L272.

This sequence belongs to the UPF0761 family.

Its subcellular location is the cell inner membrane. This is UPF0761 membrane protein Ppha_1623 from Pelodictyon phaeoclathratiforme (strain DSM 5477 / BU-1).